The sequence spans 439 residues: Rho GTPase-activating protein 1 (439 aa).

An N-acetylmethionine modification is found at Met-1. The span at 28-48 (IDEKNWPSDEMPDFPKSDDSK) shows a compositional bias: basic and acidic residues. Positions 28–52 (IDEKNWPSDEMPDFPKSDDSKSSSP) are disordered. Phosphoserine is present on residues Ser-44, Ser-47, Ser-50, and Ser-51. A CRAL-TRIO domain is found at 63-218 (PYYDIARHQI…QVLKYDDFLK (156 aa)). Tyr-65 is subject to Phosphotyrosine. Lys-80 bears the N6-acetyllysine mark. The SH3-binding signature appears at 228–238 (PKPMPPRPPLP). Residues 244 to 431 (VSLQHLQEKN…FLLDHQGELF (188 aa)) form the Rho-GAP domain.

As to quaternary structure, found in a complex with XPO7, EIF4A1, ARHGAP1, VPS26A, VPS29, VPS35 and SFN. Interacts with BNIPL. Ubiquitous.

It localises to the cytoplasm. GTPase activator for the Rho, Rac and Cdc42 proteins, converting them to the putatively inactive GDP-bound state. Cdc42 seems to be the preferred substrate. In Homo sapiens (Human), this protein is Rho GTPase-activating protein 1 (ARHGAP1).